A 209-amino-acid polypeptide reads, in one-letter code: Octanoyltransferase (209 aa).

The 180-residue stretch at 30–209 folds into the BPL/LPL catalytic domain; that stretch reads DHEPEIIYLV…IQTEFNKIFK (180 aa). Residues 69-76, 143-145, and 156-158 contribute to the substrate site; these read RGGKFTFH, AIG, and GVA. C174 acts as the Acyl-thioester intermediate in catalysis.

It belongs to the LipB family.

The protein resides in the cytoplasm. It carries out the reaction octanoyl-[ACP] + L-lysyl-[protein] = N(6)-octanoyl-L-lysyl-[protein] + holo-[ACP] + H(+). It functions in the pathway protein modification; protein lipoylation via endogenous pathway; protein N(6)-(lipoyl)lysine from octanoyl-[acyl-carrier-protein]: step 1/2. In terms of biological role, catalyzes the transfer of endogenously produced octanoic acid from octanoyl-acyl-carrier-protein onto the lipoyl domains of lipoate-dependent enzymes. Lipoyl-ACP can also act as a substrate although octanoyl-ACP is likely to be the physiological substrate. The protein is Octanoyltransferase of Rickettsia rickettsii (strain Iowa).